We begin with the raw amino-acid sequence, 299 residues long: Glycine--tRNA ligase alpha subunit (299 aa).

The protein belongs to the class-II aminoacyl-tRNA synthetase family. In terms of assembly, tetramer of two alpha and two beta subunits.

It localises to the cytoplasm. It catalyses the reaction tRNA(Gly) + glycine + ATP = glycyl-tRNA(Gly) + AMP + diphosphate. The polypeptide is Glycine--tRNA ligase alpha subunit (Laribacter hongkongensis (strain HLHK9)).